Consider the following 505-residue polypeptide: Histidine--tRNA ligase, mitochondrial (505 aa).

The N-terminal 31 residues, M1 to C31, are a transit peptide targeting the mitochondrion. S66 carries the phosphoserine modification. L-histidine contacts are provided by residues D130–T132, R157, Q173, D177, R326, and Y330–Y331. K443 is modified (N6-acetyllysine).

The protein belongs to the class-II aminoacyl-tRNA synthetase family. Homodimer.

The protein resides in the mitochondrion. It catalyses the reaction tRNA(His) + L-histidine + ATP = L-histidyl-tRNA(His) + AMP + diphosphate + H(+). In terms of biological role, mitochondrial aminoacyl-tRNA synthetase that catalyzes the ATP-dependent ligation of histidine to the 3'-end of its cognate tRNA, via the formation of an aminoacyl-adenylate intermediate (His-AMP). The chain is Histidine--tRNA ligase, mitochondrial (Hars2) from Mus musculus (Mouse).